Here is a 660-residue protein sequence, read N- to C-terminus: Acyl-coenzyme A oxidase acox-1.3 (660 aa).

Residues 146–149 (YAQT), 154–155 (GT), and Gly188 each bind FAD. Substrate-binding positions include 282-285 (KIGY) and Arg292. Residues Arg317 and 337–340 (QQHR) each bind FAD. ATP is bound by residues His339, Ser389, His393, and Gln401. 430–431 (YE) contacts substrate. Glu431 serves as the catalytic Proton acceptor. FAD is bound at residue Glu433. ATP is bound by residues 524–527 (RASR) and Tyr572. Positions 658–660 (AKL) match the Microbody targeting signal motif.

The protein belongs to the acyl-CoA oxidase family. In terms of assembly, forms a heterodimer with acox-1.1; the interaction may be important for the stability of acox-1.3. The cofactor is FAD.

Its subcellular location is the peroxisome. It carries out the reaction asc-C7-CoA + O2 = asc-DeltaC7-CoA + H2O2. Its pathway is lipid metabolism; peroxisomal fatty acid beta-oxidation. With respect to regulation, activated by ATP. ATP binding leads to a conformational change that promotes FAD cofactor binding and enzyme activity. ATP binding likely occurs during acox-1.3 folding and/or dimer formation. Functionally, involved in the first step of peroxisomal beta-oxidation by catalyzing the desaturation of fatty acid-derived side chains of ascaroside pheromones, which regulates development and behavior. Specifically, shortens ascarosides with a 7-carbon side chain (asc-C7). Does not catalyze the desaturation of fatty acids or hydroxylated fatty acids. Involved in the biosynthesis of asc-C6-MK (daumone 2) and asc-delta-C9 (daumone 3) but not asc-C7 (daumone 1); daumones are pheromones produced during unfavourable growth conditions which promote entry into the dauer stage. The chain is Acyl-coenzyme A oxidase acox-1.3 from Caenorhabditis elegans.